Consider the following 222-residue polypeptide: Cysteine protease inhibitor 9 (222 aa).

Residues 1–26 form the signal peptide; sequence MKSINILSFLLLSSTLSLVAFARSFS. Positions 27 to 42 are excised as a propeptide; the sequence is SENPIVLPSTCHDDDN. Residues 29–34 carry the Vacuolar targeting signal motif; the sequence is NPIVLP. 2 disulfides stabilise this stretch: cysteine 84/cysteine 136 and cysteine 185/cysteine 191.

This sequence belongs to the protease inhibitor I3 (leguminous Kunitz-type inhibitor) family. Tuber.

It is found in the vacuole. In terms of biological role, putative inhibitor of cysteine proteases. Does not inhibit papain. May protect the plant by inhibiting proteases of invading organisms. This chain is Cysteine protease inhibitor 9, found in Solanum tuberosum (Potato).